We begin with the raw amino-acid sequence, 367 residues long: Protein SGT1 homolog (367 aa).

TPR repeat units lie at residues 6–39 (ASDLESKAKAAFVDDDFELAAELYTQAIEASPAT), 40–73 (AELYADRAQAHIKLGNYTEAVADANKAIELDPSM), and 75–107 (KAYLRKGAACIRLEEYQTAKAALELGYSFASGD). A CS domain is found at 165 to 254 (KPKYRHDFYN…AEQITWTSLD (90 aa)). 2 disordered regions span residues 261 to 289 (AVPQKIIPPAESAQRPSYPSSKSKKDWDK) and 347 to 367 (VGSKKVEGSPPDGMELKKWEY). Positions 277 to 367 (SYPSSKSKKD…DGMELKKWEY (91 aa)) constitute an SGS domain.

It belongs to the SGT1 family. In terms of assembly, interacts (via CS domain) with RAR1 (via CHORD 2 domain). Interacts with RAD6. In terms of tissue distribution, expressed in roots, root tips, shoot apical meristem (SAM), young leaves, flag leaves and ears.

The protein resides in the cytoplasm. The protein localises to the nucleus. In terms of biological role, involved in basal disease resistance to bacterial blight (X.oryzae). May act as positive regulator of basal defense. Probably required for SCF-mediated ubiquitination, by coupling HSP90 to SCF complex for ubiquitination of HSP90 client proteins. The sequence is that of Protein SGT1 homolog from Oryza sativa subsp. japonica (Rice).